Here is a 217-residue protein sequence, read N- to C-terminus: Adr-2-binding protein 1 (217 aa).

The interval 33 to 65 (ARPEPQHDSLKRRNTTSSIAKKKAKMTRGDEQI) is disordered. Basic residues predominate over residues 44-58 (RRNTTSSIAKKKAKM).

In terms of assembly, interacts with double-stranded RNA-specific adenosine deaminase adr-2. Expressed in main body hypodermal cells, the hypodermal seam cells, pharynx, intestine and some neurons.

The protein localises to the nucleus. In terms of biological role, required for the A-I editing activity of the double-stranded RNA-specific adenosine deaminase adr-2 by facilitating adr-2 nuclear localization. In Caenorhabditis elegans, this protein is Adr-2-binding protein 1.